The following is a 507-amino-acid chain: Cytochrome P450 4A14 (507 aa).

Residues 1–4 (MGFS) constitute a propeptide, removed in mature form. Glu-318 contacts heme. Position 437 is a phosphoserine (Ser-437). Cys-454 serves as a coordination point for heme.

The protein belongs to the cytochrome P450 family. It depends on heme as a cofactor.

Its subcellular location is the endoplasmic reticulum membrane. The protein localises to the microsome membrane. It carries out the reaction an omega-methyl-long-chain fatty acid + reduced [NADPH--hemoprotein reductase] + O2 = an omega-hydroxy-long-chain fatty acid + oxidized [NADPH--hemoprotein reductase] + H2O + H(+). It catalyses the reaction dodecanoate + reduced [NADPH--hemoprotein reductase] + O2 = (11R)-hydroxydodecanoate + oxidized [NADPH--hemoprotein reductase] + H2O + H(+). The catalysed reaction is dodecanoate + reduced [NADPH--hemoprotein reductase] + O2 = 12-hydroxydodecanoate + oxidized [NADPH--hemoprotein reductase] + H2O + H(+). The enzyme catalyses tetradecanoate + reduced [NADPH--hemoprotein reductase] + O2 = 14-hydroxytetradecanoate + oxidized [NADPH--hemoprotein reductase] + H2O + H(+). The protein operates within lipid metabolism; fatty acid metabolism. Its function is as follows. A cytochrome P450 monooxygenase that catalyzes omega and omega-1 hydroxylation of saturated fatty acids. Exhibits preferential omega versus omega-1 regioselectivity and (R) versus (S) stereoselectivity for hydroxylation of dodecanoic (lauric) acid. Mechanistically, uses molecular oxygen inserting one oxygen atom into a substrate, and reducing the second into a water molecule, with two electrons provided by NADPH via cytochrome P450 reductase (CPR; NADPH-ferrihemoprotein reductase). In Rattus norvegicus (Rat), this protein is Cytochrome P450 4A14.